Reading from the N-terminus, the 222-residue chain is Triosephosphate isomerase (222 aa).

A substrate-binding site is contributed by 9-11; it reads NYK. The Electrophile role is filled by H93. Residue E141 is the Proton acceptor of the active site. Substrate contacts are provided by residues I146, G181, and 202–203; that span reads AS.

Belongs to the triosephosphate isomerase family. In terms of assembly, homotetramer; dimer of dimers.

It localises to the cytoplasm. The enzyme catalyses D-glyceraldehyde 3-phosphate = dihydroxyacetone phosphate. The protein operates within carbohydrate biosynthesis; gluconeogenesis. It participates in carbohydrate degradation; glycolysis; D-glyceraldehyde 3-phosphate from glycerone phosphate: step 1/1. Involved in the gluconeogenesis. Catalyzes stereospecifically the conversion of dihydroxyacetone phosphate (DHAP) to D-glyceraldehyde-3-phosphate (G3P). The protein is Triosephosphate isomerase of Methanobrevibacter smithii (strain ATCC 35061 / DSM 861 / OCM 144 / PS).